The chain runs to 350 residues: MGLYQLLKPALFQLDAETAHGLGHRVLDGIQGTPLERIVADYCTVVDPRLRVDAFGQTFPNPVGVAAGFDKNAEIPDALGALGFGHVEVGGVTAEPQAGNPRPRMFRLAEDRALINRMGFNNDGADIVGERLAATDCRVPVGVNIGKSKSAANDDAEADYQYTYERVADGGDYFVVNVSSPNTPGLRELQSRDRLESILGTLQDDGASPLLVKLSPDLTDAAIEDAIEVVEDLGLDGIIATNTTTKRPASLHSDAADEEGGLSGAPITDESTDIVRFIAKRTDKPIVGVGGIDDAESAYEKIRNGASVVQLYTGLVYEGPTIARDINRGLLKLLERDGFASVEDAVGVDI.

FMN is bound by residues 67–71 and G91; that span reads AGFDK. A substrate-binding site is contributed by K71. 116 to 120 contacts substrate; the sequence is NRMGF. Residues N144 and N177 each coordinate FMN. N177 provides a ligand contact to substrate. The active-site Nucleophile is the S180. N182 contributes to the substrate binding site. 2 residues coordinate FMN: K213 and T241. Substrate is bound at residue 242–243; that stretch reads NT. Positions 249 to 268 are disordered; it reads ASLHSDAADEEGGLSGAPIT. FMN contacts are provided by residues G264, G291, and 312–313; that span reads YT.

The protein belongs to the dihydroorotate dehydrogenase family. Type 2 subfamily. In terms of assembly, monomer. Requires FMN as cofactor.

Its subcellular location is the cell membrane. The enzyme catalyses (S)-dihydroorotate + a quinone = orotate + a quinol. The protein operates within pyrimidine metabolism; UMP biosynthesis via de novo pathway; orotate from (S)-dihydroorotate (quinone route): step 1/1. Catalyzes the conversion of dihydroorotate to orotate with quinone as electron acceptor. This chain is Dihydroorotate dehydrogenase (quinone), found in Natronomonas pharaonis (strain ATCC 35678 / DSM 2160 / CIP 103997 / JCM 8858 / NBRC 14720 / NCIMB 2260 / Gabara) (Halobacterium pharaonis).